A 123-amino-acid chain; its full sequence is Chaperone protein SycN (123 aa).

As to quaternary structure, interacts with YscB to form a complex which specifically binds to YopN.

Its subcellular location is the cytoplasm. The protein resides in the cell inner membrane. Functions as a specific chaperone for YopN. It could facilitate the secretion and the subsequent translocation of YopN. This is Chaperone protein SycN (sycN) from Yersinia pseudotuberculosis serotype I (strain IP32953).